The chain runs to 378 residues: tRNA-specific 2-thiouridylase MnmA (378 aa).

Residues 9-16 (GVSGGVDS) and methionine 35 each bind ATP. Residues 94–96 (NPD) form an interaction with target base in tRNA region. The Nucleophile role is filled by cysteine 99. Residues cysteine 99 and cysteine 195 are joined by a disulfide bond. An ATP-binding site is contributed by glycine 123. Positions 145-147 (KDQ) are interaction with tRNA. Catalysis depends on cysteine 195, which acts as the Cysteine persulfide intermediate. The interaction with tRNA stretch occupies residues 307–308 (RY).

Belongs to the MnmA/TRMU family.

Its subcellular location is the cytoplasm. It catalyses the reaction S-sulfanyl-L-cysteinyl-[protein] + uridine(34) in tRNA + AH2 + ATP = 2-thiouridine(34) in tRNA + L-cysteinyl-[protein] + A + AMP + diphosphate + H(+). Functionally, catalyzes the 2-thiolation of uridine at the wobble position (U34) of tRNA, leading to the formation of s(2)U34. The protein is tRNA-specific 2-thiouridylase MnmA of Xanthomonas campestris pv. campestris (strain 8004).